Here is a 555-residue protein sequence, read N- to C-terminus: Urocanate hydratase (555 aa).

NAD(+) is bound by residues 52-53 (GG), Gln130, 176-178 (GMG), Glu196, Arg201, 242-243 (NA), 263-267 (QTSAH), 273-274 (YL), and Tyr322. Cys410 is a catalytic residue. Residue Gly492 participates in NAD(+) binding.

The protein belongs to the urocanase family. It depends on NAD(+) as a cofactor.

It is found in the cytoplasm. The catalysed reaction is 4-imidazolone-5-propanoate = trans-urocanate + H2O. It participates in amino-acid degradation; L-histidine degradation into L-glutamate; N-formimidoyl-L-glutamate from L-histidine: step 2/3. In terms of biological role, catalyzes the conversion of urocanate to 4-imidazolone-5-propionate. The protein is Urocanate hydratase of Shewanella baltica (strain OS185).